The primary structure comprises 824 residues: Protein bicaudal D homolog 2 (824 aa).

Ser2 bears the N-acetylserine mark. Positions 20–269 (EWLRAEVKRL…ELSHYMSIND (250 aa)) form a coiled coil. Positions 25–398 (EVKRLSHELA…RLTENLSALR (374 aa)) are interacts with DYNLL1, DYNC1H1, DYNC1I2, DCTN1 and DCTN2. Residues Ser190, Ser224, and Ser318 each carry the phosphoserine modification. The segment at 311-330 (LPLDNKTSTPKKEGLAPPSP) is disordered. At Thr319 the chain carries Phosphothreonine. The interval 334–599 (SDLLSELNIS…LLAPEAGRAD (266 aa)) is interaction with KIF5A. Positions 338–537 (SELNISEIQK…VTFSEELANL (200 aa)) form a coiled coil. Phosphoserine occurs at positions 343 and 395. 3 disordered regions span residues 398–425 (RRLQ…GDYY), 559–622 (EGQG…DPRR), and 804–824 (EQTR…TPSL). Positions 402 to 422 (ASKERQTALDNEKDRDSHEDG) are enriched in basic and acidic residues. Phosphoserine occurs at positions 568, 574, and 582. Residues 590–824 (LLAPEAGRAD…PKTKPATPSL (235 aa)) are interaction with RANBP2. A Phosphothreonine modification is found at Thr602. Residues 604–618 (DSSPSPGSSLPSPLS) are compositionally biased toward low complexity. Positions 666-808 (DKDKEALMEE…LELDHEQTRR (143 aa)) form a coiled coil. Residues 666–814 (DKDKEALMEE…QTRRGRAKAA (149 aa)) are interacts with RAB6A. At Thr821 the chain carries Phosphothreonine. Position 823 is a phosphoserine (Ser823).

It belongs to the BicD family. As to quaternary structure, part of a tripartite complex with dynein and dynactin, acts an adapter linking the dynein motor complex and dynactin. Interacts with CPNE4 (via VWFA domain). Interacts with RAB6A. Interacts with NEK9. Interacts with DNAI1. Interacts with DYNC1H1. Interacts with RANBP2. Binds preferentially to tyrosinated microtubules than to detyrosinated microtubules. Interacts with DYNLL1, DYNC1I2; DCTN1, DCTN2 and KIF5A. Interacts with KIF1C. In terms of processing, phosphorylated by NEK9 in vitro. As to expression, ubiquitous.

The protein localises to the golgi apparatus. It is found in the cytoplasm. The protein resides in the cytoskeleton. Its subcellular location is the nucleus envelope. It localises to the nucleus. The protein localises to the nuclear pore complex. Acts as an adapter protein linking the dynein motor complex to various cargos and converts dynein from a non-processive to a highly processive motor in the presence of dynactin. Facilitates and stabilizes the interaction between dynein and dynactin and activates dynein processivity (the ability to move along a microtubule for a long distance without falling off the track). Facilitates the binding of RAB6A to the Golgi by stabilizing its GTP-bound form. Regulates coat complex coatomer protein I (COPI)-independent Golgi-endoplasmic reticulum transport via its interaction with RAB6A and recruitment of the dynein-dynactin motor complex. Contributes to nuclear and centrosomal positioning prior to mitotic entry through regulation of both dynein and kinesin-1. During G2 phase of the cell cycle, associates with RANBP2 at the nuclear pores and recruits dynein and dynactin to the nuclear envelope to ensure proper positioning of the nucleus relative to centrosomes prior to the onset of mitosis. The sequence is that of Protein bicaudal D homolog 2 from Homo sapiens (Human).